Consider the following 923-residue polypeptide: Transportin-3 (923 aa).

Residue M1 is modified to N-acetylmethionine. S74 bears the Phosphoserine mark. A phosphothreonine mark is found at H242 and T896.

In terms of assembly, interacts with (GTP-bound) Ran. Interacts with (phosphorylated) SFRS1 and SFRS2; leading to their nuclear import. Interacts with NUP62. Interacts with RBM4. Interacts with CPSF6, promoting its nuclear import.

The protein resides in the nucleus envelope. It is found in the cytoplasm. Its function is as follows. Importin, which transports target proteins into the nucleus. Specifically mediates the nuclear import of splicing factor serine/arginine (SR) proteins, such as RBM4, SFRS1 and SFRS2, by recognizing phosphorylated SR domains. Also mediates the nuclear import of serine/arginine (SR) protein CPSF6, independently of CPSF6 phosphorylation. The nuclear import process is regulated by the small GTPase Ran that partitions between cytoplasm and nucleus in the predominantly GDP- and GTP-bound form, respectively. Importin associates with target cargo proteins in the cytoplasm, and the competitive binding of GTP-bound Ran induces the release of cargos in the nucleus. In Mus musculus (Mouse), this protein is Transportin-3.